Here is a 678-residue protein sequence, read N- to C-terminus: Glycine--tRNA ligase beta subunit (678 aa).

The protein belongs to the class-II aminoacyl-tRNA synthetase family. Tetramer of two alpha and two beta subunits.

The protein resides in the cytoplasm. The catalysed reaction is tRNA(Gly) + glycine + ATP = glycyl-tRNA(Gly) + AMP + diphosphate. The chain is Glycine--tRNA ligase beta subunit from Streptococcus pneumoniae (strain P1031).